Here is a 292-residue protein sequence, read N- to C-terminus: Protoheme IX farnesyltransferase (292 aa).

A run of 8 helical transmembrane segments spans residues Tyr-15–Met-35, Phe-49–Ile-69, Val-104–Leu-124, Ile-147–Val-167, Ala-171–Leu-191, Thr-218–Val-238, Tyr-242–Phe-262, and Leu-271–Val-291.

The protein belongs to the UbiA prenyltransferase family. Protoheme IX farnesyltransferase subfamily.

The protein resides in the cell inner membrane. It carries out the reaction heme b + (2E,6E)-farnesyl diphosphate + H2O = Fe(II)-heme o + diphosphate. It participates in porphyrin-containing compound metabolism; heme O biosynthesis; heme O from protoheme: step 1/1. Converts heme B (protoheme IX) to heme O by substitution of the vinyl group on carbon 2 of heme B porphyrin ring with a hydroxyethyl farnesyl side group. The polypeptide is Protoheme IX farnesyltransferase (Aquifex aeolicus (strain VF5)).